The following is a 117-amino-acid chain: Large ribosomal subunit protein bL20c (117 aa).

Belongs to the bacterial ribosomal protein bL20 family.

The protein localises to the plastid. Its subcellular location is the chloroplast. Its function is as follows. Binds directly to 23S ribosomal RNA and is necessary for the in vitro assembly process of the 50S ribosomal subunit. It is not involved in the protein synthesizing functions of that subunit. The polypeptide is Large ribosomal subunit protein bL20c (Manihot esculenta (Cassava)).